The primary structure comprises 92 residues: MKWVTVVLSFALVCCQYSLWFGKGSIGRNSSLREQIAVQEEKNQTLALRNHSLAAEVYDLENGQEAISEIARVELGYIQDGETFYRLIRHNR.

The Cytoplasmic segment spans residues 1-3 (MKW). Residues 4–21 (VTVVLSFALVCCQYSLWF) form a helical membrane-spanning segment. The Periplasmic portion of the chain corresponds to 22-92 (GKGSIGRNSS…TFYRLIRHNR (71 aa)). Residues 28–50 (RNSSLREQIAVQEEKNQTLALRN) are a coiled coil.

The protein belongs to the FtsB family. As to quaternary structure, part of a complex composed of FtsB, FtsL and FtsQ.

Its subcellular location is the cell inner membrane. Its function is as follows. Essential cell division protein. May link together the upstream cell division proteins, which are predominantly cytoplasmic, with the downstream cell division proteins, which are predominantly periplasmic. In Neisseria meningitidis serogroup C (strain 053442), this protein is Cell division protein FtsB.